The chain runs to 370 residues: Phospho-N-acetylmuramoyl-pentapeptide-transferase (370 aa).

The next 10 helical transmembrane spans lie at 29 to 49, 70 to 90, 93 to 113, 133 to 153, 177 to 197, 209 to 229, 251 to 271, 273 to 293, 298 to 318, and 349 to 369; these read AGLTSMFITFIFGKSLISFLL, GTPTMGGLIMILSLTISTLLW, LSNWNVILLLISAILFAGLGF, KFIVTILFAVTITTLYFYYTG, GPVWNLGIFAVPFAIIVLIGS, GLASGTVVISTATFALIAYVS, VFLAGLSGALLGFLWFNCHPA, VFMGDTGSLFLGSTLGLVAIM, ILLVILGGIFVAEAVSVILQV, and VIRFWIIGIILAIITLSTLKI.

The protein belongs to the glycosyltransferase 4 family. MraY subfamily. Requires Mg(2+) as cofactor.

Its subcellular location is the cell inner membrane. It carries out the reaction UDP-N-acetyl-alpha-D-muramoyl-L-alanyl-gamma-D-glutamyl-meso-2,6-diaminopimeloyl-D-alanyl-D-alanine + di-trans,octa-cis-undecaprenyl phosphate = di-trans,octa-cis-undecaprenyl diphospho-N-acetyl-alpha-D-muramoyl-L-alanyl-D-glutamyl-meso-2,6-diaminopimeloyl-D-alanyl-D-alanine + UMP. Its pathway is cell wall biogenesis; peptidoglycan biosynthesis. Functionally, catalyzes the initial step of the lipid cycle reactions in the biosynthesis of the cell wall peptidoglycan: transfers peptidoglycan precursor phospho-MurNAc-pentapeptide from UDP-MurNAc-pentapeptide onto the lipid carrier undecaprenyl phosphate, yielding undecaprenyl-pyrophosphoryl-MurNAc-pentapeptide, known as lipid I. The chain is Phospho-N-acetylmuramoyl-pentapeptide-transferase from Leptospira biflexa serovar Patoc (strain Patoc 1 / Ames).